A 370-amino-acid polypeptide reads, in one-letter code: Histidinol-phosphate aminotransferase (370 aa).

N6-(pyridoxal phosphate)lysine is present on lysine 222.

This sequence belongs to the class-II pyridoxal-phosphate-dependent aminotransferase family. Histidinol-phosphate aminotransferase subfamily. In terms of assembly, homodimer. Pyridoxal 5'-phosphate serves as cofactor.

The catalysed reaction is L-histidinol phosphate + 2-oxoglutarate = 3-(imidazol-4-yl)-2-oxopropyl phosphate + L-glutamate. It participates in amino-acid biosynthesis; L-histidine biosynthesis; L-histidine from 5-phospho-alpha-D-ribose 1-diphosphate: step 7/9. The chain is Histidinol-phosphate aminotransferase from Bacillus cytotoxicus (strain DSM 22905 / CIP 110041 / 391-98 / NVH 391-98).